A 296-amino-acid polypeptide reads, in one-letter code: Light-independent protochlorophyllide reductase iron-sulfur ATP-binding protein (296 aa).

Residues 10–15 and Lys39 contribute to the ATP site; that span reads GIGKST. Ser14 provides a ligand contact to Mg(2+). Residues Cys95 and Cys129 each contribute to the [4Fe-4S] cluster site. 180–181 lines the ATP pocket; it reads NR.

It belongs to the NifH/BchL/ChlL family. As to quaternary structure, homodimer. Protochlorophyllide reductase is composed of three subunits; ChlL, ChlN and ChlB. Requires [4Fe-4S] cluster as cofactor.

It is found in the plastid. It localises to the chloroplast. The enzyme catalyses chlorophyllide a + oxidized 2[4Fe-4S]-[ferredoxin] + 2 ADP + 2 phosphate = protochlorophyllide a + reduced 2[4Fe-4S]-[ferredoxin] + 2 ATP + 2 H2O. The protein operates within porphyrin-containing compound metabolism; chlorophyll biosynthesis (light-independent). In terms of biological role, component of the dark-operative protochlorophyllide reductase (DPOR) that uses Mg-ATP and reduced ferredoxin to reduce ring D of protochlorophyllide (Pchlide) to form chlorophyllide a (Chlide). This reaction is light-independent. The L component serves as a unique electron donor to the NB-component of the complex, and binds Mg-ATP. The polypeptide is Light-independent protochlorophyllide reductase iron-sulfur ATP-binding protein (Chlorokybus atmophyticus (Soil alga)).